The following is a 265-amino-acid chain: Acetylglutamate kinase (265 aa).

Substrate-binding positions include 41-42 (GG), R63, and N156.

This sequence belongs to the acetylglutamate kinase family. ArgB subfamily.

It is found in the cytoplasm. The enzyme catalyses N-acetyl-L-glutamate + ATP = N-acetyl-L-glutamyl 5-phosphate + ADP. It functions in the pathway amino-acid biosynthesis; L-arginine biosynthesis; N(2)-acetyl-L-ornithine from L-glutamate: step 2/4. Its function is as follows. Catalyzes the ATP-dependent phosphorylation of N-acetyl-L-glutamate. This chain is Acetylglutamate kinase, found in Brevibacillus brevis (strain 47 / JCM 6285 / NBRC 100599).